The sequence spans 156 residues: Small ribosomal subunit protein uS7 (156 aa).

This sequence belongs to the universal ribosomal protein uS7 family. In terms of assembly, part of the 30S ribosomal subunit. Contacts proteins S9 and S11.

Functionally, one of the primary rRNA binding proteins, it binds directly to 16S rRNA where it nucleates assembly of the head domain of the 30S subunit. Is located at the subunit interface close to the decoding center, probably blocks exit of the E-site tRNA. The sequence is that of Small ribosomal subunit protein uS7 from Campylobacter hominis (strain ATCC BAA-381 / DSM 21671 / CCUG 45161 / LMG 19568 / NCTC 13146 / CH001A).